Here is a 420-residue protein sequence, read N- to C-terminus: MSNVRYISNLTRETYALILAGGRGSRLHELTDWRAKPALYFGGKFRIIDFPLSNCINSGIRRVGVVTQYKSHSLIRHVMRGWGHFKKELGESVEILPASQRYSENWYQGTADAVFQNIDIIRHELPKYVMVLSGDHVYRMDYAGLLAAHAESGADMTVSCLEVPIAEAAGSFGVMEVDEEMRILGFEEKPQQPKHSPGNPEMCLASMGNYVFNTEFLFDQLKKDALNESSDRDFGKDIIPAIIEKHNVFAYPFKSAFPNEQAYWRDVGTLDSFWQANMELLSPTPALNLYDAKWPIWTFQEQLPPAKFVFDDDDRRGMALDSIVSGGCIISGATVRRSVLFNEVRVCSYSLVEDSVVLPDVVVLRHCKIKNAILDRGCIIPEGMVIGYNHDHDRAKGFRVSEKGVTLVTRDMLGLPVGYE.

Alpha-D-glucose 1-phosphate-binding positions include Y107, G173, 188-189 (EK), and S206.

The protein belongs to the bacterial/plant glucose-1-phosphate adenylyltransferase family. In terms of assembly, homotetramer.

It catalyses the reaction alpha-D-glucose 1-phosphate + ATP + H(+) = ADP-alpha-D-glucose + diphosphate. The protein operates within glycan biosynthesis; glycogen biosynthesis. Its function is as follows. Involved in the biosynthesis of ADP-glucose, a building block required for the elongation reactions to produce glycogen. Catalyzes the reaction between ATP and alpha-D-glucose 1-phosphate (G1P) to produce pyrophosphate and ADP-Glc. The sequence is that of Glucose-1-phosphate adenylyltransferase from Shewanella baltica (strain OS185).